Here is an 868-residue protein sequence, read N- to C-terminus: Probable beta-glucosidase F (868 aa).

The first 20 residues, 1-20 (MAHRWLILALVAAAAPRALA), serve as a signal peptide directing secretion. Residues 21-40 (SPGPSLNERQSDDEPFSPPY) are disordered. N-linked (GlcNAc...) asparagine glycosylation is found at N65, N73, and N257. The active site involves D285. N-linked (GlcNAc...) asparagine glycosylation is found at N328, N360, N395, N421, and N726. A disordered region spans residues 731-752 (YPYPDGYSTDPQPPPRAGGAEG).

This sequence belongs to the glycosyl hydrolase 3 family.

The protein resides in the secreted. It catalyses the reaction Hydrolysis of terminal, non-reducing beta-D-glucosyl residues with release of beta-D-glucose.. The protein operates within glycan metabolism; cellulose degradation. Beta-glucosidases are one of a number of cellulolytic enzymes involved in the degradation of cellulosic biomass. Catalyzes the last step releasing glucose from the inhibitory cellobiose. The sequence is that of Probable beta-glucosidase F (bglF) from Emericella nidulans (strain FGSC A4 / ATCC 38163 / CBS 112.46 / NRRL 194 / M139) (Aspergillus nidulans).